The chain runs to 429 residues: High mobility group nucleosome-binding domain-containing protein 5 (429 aa).

The tract at residues 1–429 (MPKRKAAGDA…GEKGEPVSTV (429 aa)) is disordered. Thr-29 is modified (phosphothreonine). The span at 35-44 (KRASTSRKTK) shows a compositional bias: basic residues. A Glycyl lysine isopeptide (Lys-Gly) (interchain with G-Cter in SUMO2) cross-link involves residue Lys-64. The residue at position 90 (Ser-90) is a Phosphoserine. Basic and acidic residues-rich tracts occupy residues 92–101 (METEEVKEQI) and 109–124 (GGEKKEAVVTKGKNDE). Lys-98 is covalently cross-linked (Glycyl lysine isopeptide (Lys-Gly) (interchain with G-Cter in SUMO1); alternate). Residue Lys-98 forms a Glycyl lysine isopeptide (Lys-Gly) (interchain with G-Cter in SUMO2); alternate linkage. Lys-121 is covalently cross-linked (Glycyl lysine isopeptide (Lys-Gly) (interchain with G-Cter in SUMO2)). Residues 133–152 (EKDEDEKEHEDTGEEGEDGE) are compositionally biased toward acidic residues. Basic and acidic residues predominate over residues 153–195 (REGGLKEKPDVAEIEDAKEAKDDEEKEDKEKEDDKGGDGKKEE). Acidic residues predominate over residues 196-209 (EKDDEGEAETEEEV). Basic and acidic residues-rich tracts occupy residues 210 to 387 (KEQQ…NEDR) and 413 to 429 (NKDFKEDGEKGEPVSTV).

It belongs to the HMGN family. Expressed in trophoblast giant cells.

It is found in the nucleus. Preferentially binds to euchromatin and modulates cellular transcription by counteracting linker histone-mediated chromatin compaction. The chain is High mobility group nucleosome-binding domain-containing protein 5 from Rattus norvegicus (Rat).